We begin with the raw amino-acid sequence, 413 residues long: Protein FAM8A1 (413 aa).

Positions Met-1–Gly-10 are enriched in basic and acidic residues. The disordered stretch occupies residues Met-1–Pro-105. Low complexity predominate over residues Ala-49–Ala-64. Residues Asp-65–Glu-78 are compositionally biased toward basic and acidic residues. The tract at residues Arg-107 to Pro-139 is necessary and sufficient to interact with SYVN1. Residues Pro-217 to Gln-236 are disordered. The residue at position 229 (Ser-229) is a Phosphoserine. An RDD domain is found at Val-242 to Lys-408. Transmembrane regions (helical) follow at residues Phe-257–Ile-277, Met-304–Trp-324, and Ala-371–Phe-391.

In terms of assembly, component of the HRD1 complex, which comprises at least SYNV1/HRD1, FAM8A1, HERPUD1/HERP, OS9, SEL1L and UBE2J1. This interaction stabilizes FAM8A1 protein, preventing its proteasomal degradation. FAM8A1 binding to SYNV1 may promote recruitment of HERPUD1 to the HRD1 complex. Ubiquitously expressed, with a higher level of expression in testis.

Its subcellular location is the membrane. In terms of biological role, plays a role in the assembly of the HRD1 complex, a complex involved in the ubiquitin-proteasome-dependent process of ER-associated degradation (ERAD). This is Protein FAM8A1 (FAM8A1) from Homo sapiens (Human).